The chain runs to 312 residues: Ribosomal RNA small subunit methyltransferase H (312 aa).

S-adenosyl-L-methionine contacts are provided by residues 36–38 (GGH), aspartate 55, phenylalanine 81, aspartate 103, and glutamine 110.

It belongs to the methyltransferase superfamily. RsmH family.

It is found in the cytoplasm. It catalyses the reaction cytidine(1402) in 16S rRNA + S-adenosyl-L-methionine = N(4)-methylcytidine(1402) in 16S rRNA + S-adenosyl-L-homocysteine + H(+). Functionally, specifically methylates the N4 position of cytidine in position 1402 (C1402) of 16S rRNA. The sequence is that of Ribosomal RNA small subunit methyltransferase H from Marinomonas sp. (strain MWYL1).